Reading from the N-terminus, the 396-residue chain is Elongation factor Tu 2 (396 aa).

The tr-type G domain maps to 10 to 206 (KPHINVGTIG…AMDAHIPQPE (197 aa)). The segment at 19-26 (GHVDHGKT) is G1. A GTP-binding site is contributed by 19-26 (GHVDHGKT). Position 26 (Thr-26) interacts with Mg(2+). The interval 60–64 (GITIA) is G2. A G3 region spans residues 81–84 (DCPG). Residues 81-85 (DCPGH) and 136-139 (NKAD) each bind GTP. The G4 stretch occupies residues 136 to 139 (NKAD). Residues 174–176 (SAL) are G5.

It belongs to the TRAFAC class translation factor GTPase superfamily. Classic translation factor GTPase family. EF-Tu/EF-1A subfamily. Monomer.

The protein resides in the cytoplasm. It carries out the reaction GTP + H2O = GDP + phosphate + H(+). GTP hydrolase that promotes the GTP-dependent binding of aminoacyl-tRNA to the A-site of ribosomes during protein biosynthesis. This chain is Elongation factor Tu 2, found in Halorhodospira halophila (strain DSM 244 / SL1) (Ectothiorhodospira halophila (strain DSM 244 / SL1)).